An 881-amino-acid chain; its full sequence is NACHT, LRR and PYD domains-containing protein 6 (881 aa).

The 129-residue stretch at Met1–Val129 folds into the Pyrin domain. At Ser104 the chain carries Phosphoserine. Residues Ala154–Asp175 are disordered. Residues Leu194 to Leu510 enclose the NACHT domain. An ATP-binding site is contributed by Gly200–Thr207. An LRR 1 repeat occupies Glu459–Gly484. The tract at residues Gln579 to Glu611 is disordered. The span at Lys596–Glu611 shows a compositional bias: acidic residues. LRR repeat units lie at residues Leu637–Tyr660, Ala749–Gln772, and Thr839–Pro863.

The protein belongs to the NLRP family. Homomultimer; forms the NLRP6 inflammasome polymeric complex, a filament composed of homopolymers in response to pathogens and other damage-associated signals. The core of NLRP6 inflammasomes consists of a signal sensor component (NLRP6), an adapter (PYCARD/ASC), which recruits effector pro-inflammatory caspases (CASP1 and CASP4). Interacts (via pyrin domain) with PYCARD/ASC (via pyrin domain); interaction takes place following NLRP6 activation and formation of liquid-liquid phase separation (LLPS), initiating nucleation which greatly enhances further addition of soluble PYCARD/ASC molecules to the speck in a prion-like polymerization process. Clustered PYCARD/ASC nucleates the formation of CASP1 (or possibly CASP4) filaments through the interaction of their respective CARD domains, acting as a platform for CASP1 polymerization. CASP1 filament formation increases local enzyme concentration, resulting in trans-autocleavage and activation. Active CASP1 then processes IL1B and IL18 precursors, leading to the release of mature cytokines in the extracellular milieu and inflammatory response. Interacts with DHX15. In terms of processing, polyubiquitinated with 'Lys-63'-linked chains, promoting the interaction with PYCARD/ASC and formation of the NLRP6 inflammasome. Deubiquitination by CYLD decreases the interaction with PYCARD/ASC. In terms of tissue distribution, detected in several tissues. Expressed in renal epithelial cells in medullary thick ascending limb of Henle, as well as in salivary gland apical epithelium (at protein level). Isoform 1 is widely expressed. Isoform 2 is primarily expressed in kidney (at protein level).

The protein localises to the cytoplasm. The protein resides in the inflammasome. It is found in the cell membrane. It localises to the nucleus membrane. In terms of biological role, acts as the sensor component of the NLRP6 inflammasome, which mediates inflammasome activation in response to various pathogen-associated signals, leading to maturation and secretion of IL1B and IL18. Inflammasomes are supramolecular complexes that assemble in the cytosol in response to pathogens and other damage-associated signals and play critical roles in innate immunity and inflammation. Acts as a recognition receptor (PRR): recognizes and binds specific pathogens and other damage-associated signals, such as lipoteichoic acid (LTA), a cell-wall component of Gram-positive bacteria, or double stranded RNA (dsRNA). May also recognize and bind lipopolysaccharide (LPS), a major component of the outer membrane of Gram-negative bacteria; however, LPS is probably not a major activator of the NLRP6 inflammasome. Following LTA- or dsRNA-binding, NLRP6 undergoes liquid-liquid phase separation (LLPS), enhancing multivalent interactions, an essential step for the formation of the NLRP6 inflammasome polymeric complex. The NLRP6 inflammasome acts by promoting recruitment of effector pro-inflammatory caspases (CASP1 and/or CASP4) that catalyze maturation and secretion of IL1B and IL18 in the extracellular milieu. The NLRP6 inflammasome plays a central role in the maintenance of epithelial integrity and host defense against microbial infections in the intestine. Required to restrict infection against Gram-positive bacteria by recognizing lipoteichoic acid (LTA), leading to recruitment of CASP4 and CASP1, and subsequent maturation and secretion of IL1B and IL18. Involved in intestinal antiviral innate immunity together with DHX15: recognizes and binds viral dsRNA to restrict infection by enteric viruses through the interferon pathway and GSDMD-dependent release of IL18. Required to prevent infection by the apicomplexan parasite Cryptosporidium in enterocytes by promoting GSDMD-dependent release of IL18. The NLRP6 inflammasome may also regulate the gut microbiota composition by acting as a sensor of microbiota-associated metabolites to form a PYCARD/ASC-dependent inflammasome for downstream IL18 release and secretion of antimicrobial peptides. Essential for gut mucosal self-renewal and proliferation. Regulate mucus secretion in an inflammasome- and autophagy-dependent manner to prevent invasion by enteric bacteria,. During systemic bacterial infections, the NLRP6 inflammasome negatively regulates neutrophil recruitment and neutrophil extracellular traps (NETs) formation. May promote peripheral nerve recovery following injury via an inflammasome-independent mechanism. The polypeptide is NACHT, LRR and PYD domains-containing protein 6 (Rattus norvegicus (Rat)).